Consider the following 207-residue polypeptide: Ankyrin repeat-containing protein P1E11.10 (207 aa).

ANK repeat units follow at residues 36 to 65 (NGYTPIHAAVSYGHSDLLKILVERGGDINI) and 69 to 98 (DGETPLFVCEKLEIAHDLINQYNADTTVKN).

The protein localises to the cytoplasm. It localises to the nucleus. This is Ankyrin repeat-containing protein P1E11.10 from Schizosaccharomyces pombe (strain 972 / ATCC 24843) (Fission yeast).